Here is a 198-residue protein sequence, read N- to C-terminus: dTTP/UTP pyrophosphatase (198 aa).

Catalysis depends on Asp-78, which acts as the Proton acceptor.

The protein belongs to the Maf family. YhdE subfamily. A divalent metal cation is required as a cofactor.

It is found in the cytoplasm. It catalyses the reaction dTTP + H2O = dTMP + diphosphate + H(+). It carries out the reaction UTP + H2O = UMP + diphosphate + H(+). In terms of biological role, nucleoside triphosphate pyrophosphatase that hydrolyzes dTTP and UTP. May have a dual role in cell division arrest and in preventing the incorporation of modified nucleotides into cellular nucleic acids. The sequence is that of dTTP/UTP pyrophosphatase from Chromobacterium violaceum (strain ATCC 12472 / DSM 30191 / JCM 1249 / CCUG 213 / NBRC 12614 / NCIMB 9131 / NCTC 9757 / MK).